The chain runs to 100 residues: MARKSLIQRNKKRQKLELKYHWIRGSSKKEIHRVPLLSDKWEIYVKLQSSPRNSAPTRLHRRCFLTGRPRANYRDFGLSGHILREMVQACLLPGATRSSW.

The protein belongs to the universal ribosomal protein uS14 family. Part of the 30S ribosomal subunit.

It localises to the plastid. Binds 16S rRNA, required for the assembly of 30S particles. The chain is Small ribosomal subunit protein uS14c from Cuscuta exaltata (Tall dodder).